The sequence spans 271 residues: uncharacterized protein (271 aa).

This is an uncharacterized protein from Saccharomyces cerevisiae (strain ATCC 204508 / S288c) (Baker's yeast).